Reading from the N-terminus, the 81-residue chain is MVTIRLARGGAKKRPFYQVVVADSRNSRDGRFIEKVGFFNPTAQGQAEKLRLDLDRITHWVGQGATVSDRVAKLVKDATAA.

This sequence belongs to the bacterial ribosomal protein bS16 family.

The sequence is that of Small ribosomal subunit protein bS16 from Colwellia psychrerythraea (strain 34H / ATCC BAA-681) (Vibrio psychroerythus).